Reading from the N-terminus, the 180-residue chain is ATP synthase subunit delta (180 aa).

It belongs to the ATPase delta chain family. F-type ATPases have 2 components, F(1) - the catalytic core - and F(0) - the membrane proton channel. F(1) has five subunits: alpha(3), beta(3), gamma(1), delta(1), epsilon(1). F(0) has three main subunits: a(1), b(2) and c(10-14). The alpha and beta chains form an alternating ring which encloses part of the gamma chain. F(1) is attached to F(0) by a central stalk formed by the gamma and epsilon chains, while a peripheral stalk is formed by the delta and b chains.

The protein resides in the cell inner membrane. Its function is as follows. F(1)F(0) ATP synthase produces ATP from ADP in the presence of a proton or sodium gradient. F-type ATPases consist of two structural domains, F(1) containing the extramembraneous catalytic core and F(0) containing the membrane proton channel, linked together by a central stalk and a peripheral stalk. During catalysis, ATP synthesis in the catalytic domain of F(1) is coupled via a rotary mechanism of the central stalk subunits to proton translocation. Functionally, this protein is part of the stalk that links CF(0) to CF(1). It either transmits conformational changes from CF(0) to CF(1) or is implicated in proton conduction. The protein is ATP synthase subunit delta of Acidovorax sp. (strain JS42).